The sequence spans 364 residues: D-alanine--D-alanine ligase A (364 aa).

An ATP-grasp domain is found at 145-348 (KRLLRDAGLN…YTDLITRLIE (204 aa)). Residue 175 to 230 (ESKLGLPLFVKPANQGSSVGVSKVTSEEQYTIAVDLAFEFDHKVIVEQGIKGREIE) participates in ATP binding. 3 residues coordinate Mg(2+): Asp302, Glu315, and Asn317.

The protein belongs to the D-alanine--D-alanine ligase family. It depends on Mg(2+) as a cofactor. Requires Mn(2+) as cofactor.

The protein resides in the cytoplasm. It catalyses the reaction 2 D-alanine + ATP = D-alanyl-D-alanine + ADP + phosphate + H(+). It participates in cell wall biogenesis; peptidoglycan biosynthesis. Cell wall formation. The chain is D-alanine--D-alanine ligase A from Escherichia coli O6:H1 (strain CFT073 / ATCC 700928 / UPEC).